The sequence spans 508 residues: Maturase K (508 aa).

The protein belongs to the intron maturase 2 family. MatK subfamily.

The protein resides in the plastid. It is found in the chloroplast. Its function is as follows. Usually encoded in the trnK tRNA gene intron. Probably assists in splicing its own and other chloroplast group II introns. The protein is Maturase K of Marathrum schiedeanum.